Consider the following 150-residue polypeptide: Transcriptional repressor NrdR (150 aa).

A zinc finger spans residues cysteine 3–cysteine 34. One can recognise an ATP-cone domain in the interval proline 49–glutamate 139.

The protein belongs to the NrdR family. The cofactor is Zn(2+).

In terms of biological role, negatively regulates transcription of bacterial ribonucleotide reductase nrd genes and operons by binding to NrdR-boxes. The sequence is that of Transcriptional repressor NrdR from Citrifermentans bemidjiense (strain ATCC BAA-1014 / DSM 16622 / JCM 12645 / Bem) (Geobacter bemidjiensis).